A 392-amino-acid chain; its full sequence is Succinyl-diaminopimelate desuccinylase (392 aa).

H75 contributes to the Zn(2+) binding site. D77 is a catalytic residue. D108 contributes to the Zn(2+) binding site. E147 serves as the catalytic Proton acceptor. E148, E176, and H365 together coordinate Zn(2+).

This sequence belongs to the peptidase M20A family. DapE subfamily. In terms of assembly, homodimer. It depends on Zn(2+) as a cofactor. Co(2+) is required as a cofactor.

It carries out the reaction N-succinyl-(2S,6S)-2,6-diaminopimelate + H2O = (2S,6S)-2,6-diaminopimelate + succinate. It functions in the pathway amino-acid biosynthesis; L-lysine biosynthesis via DAP pathway; LL-2,6-diaminopimelate from (S)-tetrahydrodipicolinate (succinylase route): step 3/3. Functionally, catalyzes the hydrolysis of N-succinyl-L,L-diaminopimelic acid (SDAP), forming succinate and LL-2,6-diaminopimelate (DAP), an intermediate involved in the bacterial biosynthesis of lysine and meso-diaminopimelic acid, an essential component of bacterial cell walls. The sequence is that of Succinyl-diaminopimelate desuccinylase from Rhodopseudomonas palustris (strain BisB18).